We begin with the raw amino-acid sequence, 431 residues long: MTLIASLSLPPPAIQRQSLSEFHNLPAKSQSFNCQFRSSSSPLSSLHSSSLSNFLDFRLRRRNSGLVPVVACSTTPFMGRVGLHWRDGNMSLLSFCGGTDVTEKADSSQFWSALLPFVVALTAVAALSYPPSFTWVSKDLYAPALGGIMLSIGIQLSVDDFALAFKRPVPLSVGFVAQYVLKPLLGVLVANAFGMPRTFYAGFILTCCVAGAQLSSYASSLSKADVAMSILLTSSTTIASVIFTPLLSGLLIGSVVPVDAVAMSKSILQVVLVPITLGLVLNTYAKPVVTLLQPVMPFVAMVCTSLCIGSPLSINRSQILSAEGLGLIVPIVTFHAVAFALGYWFSKIPGLRQEEEVSRTISLCTGMQSSTLAGLLASQFLGSSQAVPAACSVVVMAIMGLCLASFWGNGFRIRDVLSLSTPQSTGYTAES.

The N-terminal 70 residues, 1–70 (MTLIASLSLP…RRNSGLVPVV (70 aa)), are a transit peptide targeting the chloroplast. 9 helical membrane-spanning segments follow: residues 110 to 130 (FWSALLPFVVALTAVAALSYP), 145 to 165 (LGGIMLSIGIQLSVDDFALAF), 169 to 189 (VPLSVGFVAQYVLKPLLGVLV), 198 to 218 (TFYAGFILTCCVAGAQLSSYA), 238 to 258 (IASVIFTPLLSGLLIGSVVPV), 261 to 281 (VAMSKSILQVVLVPITLGLVL), 288 to 308 (VVTLLQPVMPFVAMVCTSLCI), 325 to 345 (LGLIVPIVTFHAVAFALGYWF), and 387 to 407 (VPAACSVVVMAIMGLCLASFW).

Belongs to the bile acid:sodium symporter (BASS) (TC 2.A.28) family.

It is found in the membrane. Its subcellular location is the plastid. It localises to the chloroplast envelope. In terms of biological role, may function as sodium-coupled metabolite transporter across the chloroplast envelope. This chain is Probable sodium/metabolite cotransporter BASS3, chloroplastic (BASS3), found in Arabidopsis thaliana (Mouse-ear cress).